Here is a 429-residue protein sequence, read N- to C-terminus: Zinc finger protein 275 (429 aa).

Residues 31-95 form a disordered region; it reads VSDPSPNTDP…DGKRGSPQNL (65 aa). Polar residues predominate over residues 34–51; it reads PSPNTDPAKYSESTSATR. Ser-76 bears the Phosphoserine mark. Residues 79 to 89 are compositionally biased toward basic and acidic residues; sequence FRQHGDSDGKR. 2 consecutive C2H2-type zinc fingers follow at residues 101–123 and 129–151; these read FACKECGDTFRLKVLLVQHQRVH and WECGDCGKVFRGVAEFNEHRKSH. Residues 149-176 form a disordered region; sequence KSHVAAEPQPGPSRALENAAEKREQMER. Over residues 167-176 the composition is skewed to basic and acidic residues; that stretch reads AAEKREQMER. 9 C2H2-type zinc fingers span residues 181–203, 209–231, 237–259, 265–287, 293–315, 321–343, 349–371, 377–399, and 405–427; these read FECEECGKRFKKNAGLSQHLRVH, FDCEECGRSFKVNTHLFRHQKLH, FACKACSRDFLDRQELLKHQRMH, FDCDDCGKSFRGVNGLAEHQRIH, YGCPHCGKLFRRSSELTKHRRIH, YACGQCGKAFRQSSSLLEHARIH, YACGECGKAFRGPSDLIKHRRIH, YECDKCGKAFRRSSGLSRHRRIH, and CECSQCGRVFKRRSALQKHQPTH.

This sequence belongs to the krueppel C2H2-type zinc-finger protein family.

It localises to the nucleus. Its function is as follows. May be involved in transcriptional regulation. The polypeptide is Zinc finger protein 275 (ZNF275) (Homo sapiens (Human)).